The primary structure comprises 336 residues: Pyridoxal 5'-phosphate synthase subunit PdxS (336 aa).

D33 serves as a coordination point for D-ribose 5-phosphate. Catalysis depends on K90, which acts as the Schiff-base intermediate with D-ribose 5-phosphate. G162 is a D-ribose 5-phosphate binding site. R174 is a binding site for D-glyceraldehyde 3-phosphate. D-ribose 5-phosphate contacts are provided by residues G260 and G281 to S282.

Belongs to the PdxS/SNZ family. In terms of assembly, in the presence of PdxT, forms a dodecamer of heterodimers.

The catalysed reaction is aldehydo-D-ribose 5-phosphate + D-glyceraldehyde 3-phosphate + L-glutamine = pyridoxal 5'-phosphate + L-glutamate + phosphate + 3 H2O + H(+). Its pathway is cofactor biosynthesis; pyridoxal 5'-phosphate biosynthesis. Its function is as follows. Catalyzes the formation of pyridoxal 5'-phosphate from ribose 5-phosphate (RBP), glyceraldehyde 3-phosphate (G3P) and ammonia. The ammonia is provided by the PdxT subunit. Can also use ribulose 5-phosphate and dihydroxyacetone phosphate as substrates, resulting from enzyme-catalyzed isomerization of RBP and G3P, respectively. The chain is Pyridoxal 5'-phosphate synthase subunit PdxS from Picrophilus torridus (strain ATCC 700027 / DSM 9790 / JCM 10055 / NBRC 100828 / KAW 2/3).